We begin with the raw amino-acid sequence, 326 residues long: Holliday junction branch migration complex subunit RuvB (326 aa).

The segment at 1 to 180 (MKSISCGKEY…FGIPLHLEFY (180 aa)) is large ATPase domain (RuvB-L). Residues isoleucine 19, arginine 20, glycine 61, lysine 64, threonine 65, threonine 66, 127–129 (EDF), arginine 170, tyrosine 180, and arginine 217 contribute to the ATP site. Threonine 65 contacts Mg(2+). Positions 181–251 (SFEELVNIIK…VADSVLLKLG (71 aa)) are small ATPAse domain (RuvB-S). A head domain (RuvB-H) region spans residues 254–326 (KMGLNKLDMN…QAKEYLSFQH (73 aa)). The DNA site is built by arginine 307 and arginine 312.

It belongs to the RuvB family. Homohexamer. Forms an RuvA(8)-RuvB(12)-Holliday junction (HJ) complex. HJ DNA is sandwiched between 2 RuvA tetramers; dsDNA enters through RuvA and exits via RuvB. An RuvB hexamer assembles on each DNA strand where it exits the tetramer. Each RuvB hexamer is contacted by two RuvA subunits (via domain III) on 2 adjacent RuvB subunits; this complex drives branch migration. In the full resolvosome a probable DNA-RuvA(4)-RuvB(12)-RuvC(2) complex forms which resolves the HJ.

It is found in the cytoplasm. The catalysed reaction is ATP + H2O = ADP + phosphate + H(+). Functionally, the RuvA-RuvB-RuvC complex processes Holliday junction (HJ) DNA during genetic recombination and DNA repair, while the RuvA-RuvB complex plays an important role in the rescue of blocked DNA replication forks via replication fork reversal (RFR). RuvA specifically binds to HJ cruciform DNA, conferring on it an open structure. The RuvB hexamer acts as an ATP-dependent pump, pulling dsDNA into and through the RuvAB complex. RuvB forms 2 homohexamers on either side of HJ DNA bound by 1 or 2 RuvA tetramers; 4 subunits per hexamer contact DNA at a time. Coordinated motions by a converter formed by DNA-disengaged RuvB subunits stimulates ATP hydrolysis and nucleotide exchange. Immobilization of the converter enables RuvB to convert the ATP-contained energy into a lever motion, pulling 2 nucleotides of DNA out of the RuvA tetramer per ATP hydrolyzed, thus driving DNA branch migration. The RuvB motors rotate together with the DNA substrate, which together with the progressing nucleotide cycle form the mechanistic basis for DNA recombination by continuous HJ branch migration. Branch migration allows RuvC to scan DNA until it finds its consensus sequence, where it cleaves and resolves cruciform DNA. This Wolbachia pipientis wMel protein is Holliday junction branch migration complex subunit RuvB.